The following is a 141-amino-acid chain: Vesicle-associated membrane protein 4 (141 aa).

Positions 1-51 are disordered; that stretch reads MPPKFKRHLNDDDVTGSVKSERRNLLEDDSDEEEDFFLRGPSGPRFGPRND. Residues 1-115 are Cytoplasmic-facing; that stretch reads MPPKFKRHLN…RRQMWWRGCK (115 aa). Residues S17 and S30 each carry the phosphoserine modification. The region spanning 52–112 is the v-SNARE coiled-coil homology domain; that stretch reads KIKHVQNQVD…KQLRRQMWWR (61 aa). Residues 116-136 form a helical; Anchor for type IV membrane protein membrane-spanning segment; the sequence is IKAIMALVAAILLLVIIILIV. At 137 to 141 the chain is on the vesicular side; the sequence is MKYRT.

It belongs to the synaptobrevin family. Identified in a complex containing STX6, STX12, VAMP4 and VTI1A. Interacts with BAIAP3; this interaction is increased in the presence of calcium.

The protein resides in the golgi apparatus. The protein localises to the trans-Golgi network membrane. In terms of biological role, involved in the pathway that functions to remove an inhibitor (probably synaptotagmin-4) of calcium-triggered exocytosis during the maturation of secretory granules. May be a marker for this sorting pathway that is critical for remodeling the secretory response of granule. This is Vesicle-associated membrane protein 4 (VAMP4) from Homo sapiens (Human).